A 338-amino-acid chain; its full sequence is 3-isopropylmalate dehydrogenase (338 aa).

Residues arginine 88, arginine 98, arginine 122, and aspartate 212 each coordinate substrate. Mg(2+) contacts are provided by aspartate 212, aspartate 236, and aspartate 240. 272–284 serves as a coordination point for NAD(+); the sequence is GSAPDIAGQGIAD.

Belongs to the isocitrate and isopropylmalate dehydrogenases family. LeuB type 2 subfamily. Homodimer. Mg(2+) serves as cofactor. It depends on Mn(2+) as a cofactor.

The protein localises to the cytoplasm. The catalysed reaction is (2R,3S)-3-isopropylmalate + NAD(+) = 4-methyl-2-oxopentanoate + CO2 + NADH. It participates in amino-acid biosynthesis; L-leucine biosynthesis; L-leucine from 3-methyl-2-oxobutanoate: step 3/4. Functionally, catalyzes the oxidation of 3-carboxy-2-hydroxy-4-methylpentanoate (3-isopropylmalate) to 3-carboxy-4-methyl-2-oxopentanoate. The product decarboxylates to 4-methyl-2 oxopentanoate. This chain is 3-isopropylmalate dehydrogenase, found in Corynebacterium jeikeium (strain K411).